A 244-amino-acid polypeptide reads, in one-letter code: uncharacterized protein (244 aa).

One can recognise an FCP1 homology domain in the interval 19–196 (ATDNRKLVIL…ACVIRYLKHL (178 aa)).

This is an uncharacterized protein from Schizosaccharomyces pombe (strain 972 / ATCC 24843) (Fission yeast).